Consider the following 885-residue polypeptide: Leucine--tRNA ligase (885 aa).

A 'HIGH' region motif is present at residues 43–53 (PYTSGQLHMGH). A 'KMSKS' region motif is present at residues 571 to 575 (KMSKS). Residue K574 coordinates ATP. Residues 866–885 (SVANKAEPGRPAIHVDEADD) are disordered.

Belongs to the class-I aminoacyl-tRNA synthetase family.

Its subcellular location is the cytoplasm. The catalysed reaction is tRNA(Leu) + L-leucine + ATP = L-leucyl-tRNA(Leu) + AMP + diphosphate. This is Leucine--tRNA ligase from Halobacterium salinarum (strain ATCC 700922 / JCM 11081 / NRC-1) (Halobacterium halobium).